A 110-amino-acid chain; its full sequence is Large ribosomal subunit protein uL22 (110 aa).

The protein belongs to the universal ribosomal protein uL22 family. In terms of assembly, part of the 50S ribosomal subunit.

This protein binds specifically to 23S rRNA; its binding is stimulated by other ribosomal proteins, e.g. L4, L17, and L20. It is important during the early stages of 50S assembly. It makes multiple contacts with different domains of the 23S rRNA in the assembled 50S subunit and ribosome. In terms of biological role, the globular domain of the protein is located near the polypeptide exit tunnel on the outside of the subunit, while an extended beta-hairpin is found that lines the wall of the exit tunnel in the center of the 70S ribosome. The sequence is that of Large ribosomal subunit protein uL22 from Salmonella arizonae (strain ATCC BAA-731 / CDC346-86 / RSK2980).